The primary structure comprises 192 residues: MSQTQSLAVKTRAGLGKGACRKLRADDMVPGVYYDAKGVNVPVMVEHLPLQKLYSKIASSHVFDLQIEGETKPALVWKVEHHPTKPRITHVDFYGVDLTKEIQVRVPVEVVGKSKGQVKGGQLEIHREFIEVLCLPLVIPDKIVLDITNVDINESILIADVVLPEGVKAVYDNNYAVIGVLASAAEAAGEGA.

It belongs to the bacterial ribosomal protein bL25 family. CTC subfamily. As to quaternary structure, part of the 50S ribosomal subunit; part of the 5S rRNA/L5/L18/L25 subcomplex. Contacts the 5S rRNA. Binds to the 5S rRNA independently of L5 and L18.

This is one of the proteins that binds to the 5S RNA in the ribosome where it forms part of the central protuberance. In Solidesulfovibrio magneticus (strain ATCC 700980 / DSM 13731 / RS-1) (Desulfovibrio magneticus), this protein is Large ribosomal subunit protein bL25.